Consider the following 208-residue polypeptide: Uracil phosphoribosyltransferase (208 aa).

5-phospho-alpha-D-ribose 1-diphosphate contacts are provided by residues R78, R103, and 130-138; that span reads DPMLATGGS. Uracil is bound by residues I193 and 198–200; that span reads GDA. D199 is a 5-phospho-alpha-D-ribose 1-diphosphate binding site.

Belongs to the UPRTase family. Mg(2+) is required as a cofactor.

The enzyme catalyses UMP + diphosphate = 5-phospho-alpha-D-ribose 1-diphosphate + uracil. It participates in pyrimidine metabolism; UMP biosynthesis via salvage pathway; UMP from uracil: step 1/1. With respect to regulation, allosterically activated by GTP. Functionally, catalyzes the conversion of uracil and 5-phospho-alpha-D-ribose 1-diphosphate (PRPP) to UMP and diphosphate. The sequence is that of Uracil phosphoribosyltransferase from Klebsiella pneumoniae subsp. pneumoniae (strain ATCC 700721 / MGH 78578).